Here is a 479-residue protein sequence, read N- to C-terminus: Adenosylhomocysteinase (479 aa).

Substrate is bound by residues Thr-56, Asp-133, and Glu-199. Residue 200–202 participates in NAD(+) binding; the sequence is TTT. 2 residues coordinate substrate: Lys-229 and Asp-233. NAD(+) is bound by residues Asn-234, 263-268, Glu-286, Asn-321, 342-344, and Asn-390; these read GYGDVG and IGH.

The protein belongs to the adenosylhomocysteinase family. In terms of assembly, homotetramer. Requires NAD(+) as cofactor.

The catalysed reaction is S-adenosyl-L-homocysteine + H2O = L-homocysteine + adenosine. The protein operates within amino-acid biosynthesis; L-homocysteine biosynthesis; L-homocysteine from S-adenosyl-L-homocysteine: step 1/1. Functionally, adenosylhomocysteine is a competitive inhibitor of S-adenosyl-L-methionine-dependent methyl transferase reactions; therefore adenosylhomocysteinase may play a key role in the control of methylations via regulation of the intracellular concentration of adenosylhomocysteine. This is Adenosylhomocysteinase from Plasmodium yoelii yoelii.